A 164-amino-acid polypeptide reads, in one-letter code: Cyclic pyranopterin monophosphate synthase (164 aa).

Substrate is bound by residues 77 to 79 (LCH) and 115 to 116 (ME). Asp-130 is an active-site residue.

Belongs to the MoaC family. In terms of assembly, homohexamer; trimer of dimers.

It catalyses the reaction (8S)-3',8-cyclo-7,8-dihydroguanosine 5'-triphosphate = cyclic pyranopterin phosphate + diphosphate. It functions in the pathway cofactor biosynthesis; molybdopterin biosynthesis. Its function is as follows. Catalyzes the conversion of (8S)-3',8-cyclo-7,8-dihydroguanosine 5'-triphosphate to cyclic pyranopterin monophosphate (cPMP). The polypeptide is Cyclic pyranopterin monophosphate synthase (Sinorhizobium medicae (strain WSM419) (Ensifer medicae)).